A 199-amino-acid chain; its full sequence is Probable NADH dehydrogenase [ubiquinone] iron-sulfur protein 7, mitochondrial (199 aa).

Residues 1–16 (MLSALRTAGALSTRRL) constitute a mitochondrion transit peptide. Positions 74, 75, 139, and 169 each coordinate [4Fe-4S] cluster.

Belongs to the complex I 20 kDa subunit family. As to quaternary structure, complex I is composed of 45 different subunits This is a component of the iron-sulfur (IP) fragment of the enzyme. The cofactor is [4Fe-4S] cluster.

The protein resides in the mitochondrion. The enzyme catalyses a ubiquinone + NADH + 5 H(+)(in) = a ubiquinol + NAD(+) + 4 H(+)(out). Functionally, core subunit of the mitochondrial membrane respiratory chain NADH dehydrogenase (Complex I) that is believed to belong to the minimal assembly required for catalysis. Complex I functions in the transfer of electrons from NADH to the respiratory chain. The immediate electron acceptor for the enzyme is believed to be ubiquinone. This Caenorhabditis briggsae protein is Probable NADH dehydrogenase [ubiquinone] iron-sulfur protein 7, mitochondrial.